The chain runs to 197 residues: Potassium-transporting ATPase KdpC subunit (197 aa).

A helical membrane pass occupies residues 9–29 (LVVTLLLAALLCGAYPVLVTG).

The protein belongs to the KdpC family. The system is composed of three essential subunits: KdpA, KdpB and KdpC.

It is found in the cell inner membrane. Functionally, part of the high-affinity ATP-driven potassium transport (or Kdp) system, which catalyzes the hydrolysis of ATP coupled with the electrogenic transport of potassium into the cytoplasm. This subunit acts as a catalytic chaperone that increases the ATP-binding affinity of the ATP-hydrolyzing subunit KdpB by the formation of a transient KdpB/KdpC/ATP ternary complex. This is Potassium-transporting ATPase KdpC subunit from Nitratidesulfovibrio vulgaris (strain DSM 19637 / Miyazaki F) (Desulfovibrio vulgaris).